A 656-amino-acid chain; its full sequence is DNA mismatch repair protein MutL (656 aa).

Residues 385–427 (DNSDSLTEQNSTDYTVNQPETGSVSEKITDRTVESSNEFTDRT) are disordered. Residues 387–410 (SDSLTEQNSTDYTVNQPETGSVSE) show a composition bias toward polar residues. A compositionally biased stretch (basic and acidic residues) spans 411 to 427 (KITDRTVESSNEFTDRT).

Belongs to the DNA mismatch repair MutL/HexB family.

Its function is as follows. This protein is involved in the repair of mismatches in DNA. It is required for dam-dependent methyl-directed DNA mismatch repair. May act as a 'molecular matchmaker', a protein that promotes the formation of a stable complex between two or more DNA-binding proteins in an ATP-dependent manner without itself being part of a final effector complex. This is DNA mismatch repair protein MutL from Lactococcus lactis subsp. cremoris (strain SK11).